A 705-amino-acid polypeptide reads, in one-letter code: Protein arginine N-methyltransferase 7 (705 aa).

SAM-dependent MTase PRMT-type domains are found at residues 29–372 (QNSW…YSLW) and 381–705 (TKSV…QKKL).

Belongs to the class I-like SAM-binding methyltransferase superfamily. Protein arginine N-methyltransferase family. PRMT7 subfamily.

Functionally, essential arginine methyltransferase that can both catalyze the formation of omega-N monomethylarginine (MMA) and symmetrical dimethylarginine (sDMA). Specifically mediates the symmetrical dimethylation of arginine residues in the small nuclear ribonucleoproteins SmD1 and SmD3. The chain is Protein arginine N-methyltransferase 7 (Art7) from Drosophila simulans (Fruit fly).